Reading from the N-terminus, the 315-residue chain is Homoserine O-succinyltransferase (315 aa).

C142 (acyl-thioester intermediate) is an active-site residue. Residues K163 and S192 each coordinate substrate. Catalysis depends on H235, which acts as the Proton acceptor. E237 is a catalytic residue. Substrate is bound at residue R249. Residues 249-258 (RDCEKSDNAP) show a composition bias toward basic and acidic residues. The disordered stretch occupies residues 249 to 271 (RDCEKSDNAPKPENYFPDDDATK).

It belongs to the MetA family.

The protein localises to the cytoplasm. It catalyses the reaction L-homoserine + succinyl-CoA = O-succinyl-L-homoserine + CoA. It functions in the pathway amino-acid biosynthesis; L-methionine biosynthesis via de novo pathway; O-succinyl-L-homoserine from L-homoserine: step 1/1. Its function is as follows. Transfers a succinyl group from succinyl-CoA to L-homoserine, forming succinyl-L-homoserine. The sequence is that of Homoserine O-succinyltransferase from Pseudoalteromonas translucida (strain TAC 125).